The sequence spans 72 residues: Hypotensin-1 (72 aa).

The N-terminal stretch at 1–24 is a signal peptide; it reads MKMMIPVIFSILLLIFSLSSTAMS. Positions 25 to 35 are excised as a propeptide; that stretch reads LEDEQENMEER. Serine 41 is subject to Phosphoserine. The segment at 53 to 72 is disordered; the sequence is ETNAKPPARFDPAAFEKSDD. Residues 61–72 constitute a propeptide that is removed on maturation; sequence RFDPAAFEKSDD.

The protein belongs to the non-disulfide-bridged peptide (NDBP) superfamily. Undergoes enzymatic cleavages by carboxypeptidases, endopeptidases, and aminopeptidases resulting in at least 46 fragments of this protein. In terms of tissue distribution, expressed by the venom gland.

Its subcellular location is the secreted. In terms of biological role, agonist of the B2 bradykinin receptor (BDKRB2). Potentiates the hypotensive effect of bradykinin (BK) and induces a direct vasorelaxing effect independent of BK, by endothelium- and nitric oxide (NO)-dependent mechanisms in rat aortic ring preparations. Also exerts proangiogenic, antiinflammatory, and antifibrogenic activities. Does not inhibit the angiotensin-converting enzyme (ACE) but increases its activity, and inhibits neprilysin (NEP) in a non-competitive manner. Exerts intermediate cytotoxicity and pro-inflammatory effects on mouse macrophages, and increases the phagocytic activity of these murine cells. Its function is as follows. Presents moderate hemolytic activity at physiological concentrations (micromolar range). Does not induce mast cell degranulation, lactate dehydrogenase (LDH) release from mast cells and antimicrobial effects. In vivo, causes intense pain (but no edema formation), when injected in mice hind paws. Also induces discomfort and anxiety in mice, as it moderately diminishes locomotion and moderately increases rearing behavior. The polypeptide is Hypotensin-1 (Tityus serrulatus (Brazilian scorpion)).